The following is a 718-amino-acid chain: Gephyrin (718 aa).

Residues 1–19 are compositionally biased toward polar residues; that stretch reads MSNTLTTERNITNSPTAAQ. A disordered region spans residues 1-26; sequence MSNTLTTERNITNSPTAAQLNEKESG. The MPT Mo-transferase stretch occupies residues 31-176; that stretch reads EWIVGVLTTS…LPGSVKAIRE (146 aa). The segment covering 222 to 244 has biased composition (low complexity); the sequence is NQNNQNNNNNNNNNNNNNNNNNS. 2 disordered regions span residues 222 to 266 and 344 to 364; these read NQNN…SSYN and TGEN…NDDD. Over residues 245–254 the composition is skewed to basic residues; it reads HNHHHHHHHS. Residues 260 to 718 are MPT adenylyltransferase; the sequence is KRGSSYNMTP…KAILIGPINN (459 aa).

In the N-terminal section; belongs to the MoaB/Mog family. The protein in the C-terminal section; belongs to the MoeA family. In terms of assembly, homotrimer, homodimer and homooligomer. Requires Mg(2+) as cofactor.

Its subcellular location is the cell membrane. The protein localises to the cytoplasm. The protein resides in the cytosol. It is found in the cytoskeleton. It carries out the reaction molybdopterin + ATP + H(+) = adenylyl-molybdopterin + diphosphate. The catalysed reaction is adenylyl-molybdopterin + molybdate = Mo-molybdopterin + AMP + H(+). It functions in the pathway cofactor biosynthesis; molybdopterin biosynthesis. In terms of biological role, microtubule-associated protein involved in membrane protein-cytoskeleton interactions. Also has a catalytic activity and catalyzes two steps in the biosynthesis of the molybdenum cofactor. In the first step, molybdopterin is adenylated. Subsequently, molybdate is inserted into adenylated molybdopterin and AMP is released. The polypeptide is Gephyrin (gphn) (Dictyostelium discoideum (Social amoeba)).